The chain runs to 1218 residues: DNA polymerase subunit gamma-1 (1218 aa).

The tract at residues 31-50 (LDPVPSDGRPPSQMPSSENG) is disordered. The Exo I signature appears at 179–183 (VFDVE). Asp181 functions as the Exonuclease activity in the catalytic mechanism. The short motif at 250–258 (VGHNVSFDR) is the Exo II element. DNA is bound at residue Ser289. Residues 378–386 (YCARDVWAT) carry the Exo III motif. The segment at 484–524 (KKVKKPASASKLPIEGAGPFGDPMDQEDPGPPSEEEELQRS) is disordered. Positions 492-553 (ASKLPIEGAG…RPQHLPGHPG (62 aa)) are accessory-interacting determinant. A compositionally biased stretch (acidic residues) spans 507–520 (MDQEDPGPPSEEEE). An RNA-binding site is contributed by Arg561. Residue Ser575 participates in DNA binding. Positions 733, 742, and 747 each coordinate RNA. Lys785 and Thr828 together coordinate DNA. Residues 837-843 (TWLTASN) are trigger loop. Ser842 and Arg848 together coordinate RNA. The short motif at 866-875 (VGADVDSQEL) is the Pol A element. Positions 869, 870, 872, 874, 922, 926, and 930 each coordinate a 2'-deoxyribonucleoside 5'-triphosphate. Residues Asp869 and Val870 each contribute to the Mg(2+) site. A Pol B motif is present at residues 922–937 (REHAKIFNYGRIYGAG). Thr1073 and Ser1074 together coordinate DNA. The Pol C signature appears at 1113–1120 (HDEVRYLV). Asp1114 contacts a 2'-deoxyribonucleoside 5'-triphosphate. Asp1114 serves as a coordination point for Mg(2+).

The protein belongs to the DNA polymerase type-A family. In terms of assembly, heterotrimer composed of a catalytic subunit and a homodimer of accessory subunits (POLG:POLG2). Interacts with TTC3. Interacts with LIG3. Mg(2+) serves as cofactor.

Its subcellular location is the mitochondrion. The protein resides in the mitochondrion matrix. It is found in the mitochondrion nucleoid. The enzyme catalyses DNA(n) + a 2'-deoxyribonucleoside 5'-triphosphate = DNA(n+1) + diphosphate. It carries out the reaction a 3'-end 2'-deoxyribonucleotidyl-deoxyribonucleotide-DNA + H2O = a 3'-end 2'-deoxyribonucleotide-DNA + a 2'-deoxyribonucleoside 5'-phosphate + H(+). The catalysed reaction is a 5'-end 2'-deoxyribose-2'-deoxyribonucleotide-DNA = (2E,4S)-4-hydroxypenten-2-al-5-phosphate + a 5'-end 5'-phospho-2'-deoxyribonucleoside-DNA + H(+). With respect to regulation, inhibited by dideoxynucleotides such as antiviral agent zalcitabine. Catalytic subunit of DNA polymerase gamma solely responsible for replication of mitochondrial DNA (mtDNA). Replicates both heavy and light strands of the circular mtDNA genome using a single-stranded DNA template, RNA primers and the four deoxyribonucleoside triphosphates as substrates. Has 5' -&gt; 3' polymerase activity. Functionally interacts with TWNK and SSBP1 at the replication fork to form a highly processive replisome, where TWNK unwinds the double-stranded DNA template prior to replication and SSBP1 covers the parental heavy strand to enable continuous replication of the entire mitochondrial genome. A single nucleotide incorporation cycle includes binding of the incoming nucleotide at the insertion site, a phosphodiester bond formation reaction that extends the 3'-end of the primer DNA, and translocation of the primer terminus to the post-insertion site. After completing replication of a mtDNA strand, mediates 3' -&gt; 5' exonucleolytic degradation at the nick to enable proper ligation. Highly accurate due to high nucleotide selectivity and 3' -&gt; 5' exonucleolytic proofreading. Proficiently corrects base substitutions, single-base additions and deletions in non-repetitive sequences and short repeats, but displays lower proofreading activity when replicating longer homopolymeric stretches. Exerts exonuclease activity toward single-stranded DNA and double-stranded DNA containing 3'-terminal mispairs. When a misincorporation occurs, transitions from replication to a pro-nucleolytic editing mode and removes the missincorporated nucleoside in the exonuclease active site. Proceeds via an SN2 nucleolytic mechanism in which Asp-198 catalyzes phosphodiester bond hydrolysis and Glu-200 stabilizes the leaving group. As a result the primer strand becomes one nucleotide shorter and is positioned in the post-insertion site, ready to resume DNA synthesis. Exerts 5'-deoxyribose phosphate (dRP) lyase activity and mediates repair-associated mtDNA synthesis (gap filling) in base-excision repair pathway. Catalyzes the release of the 5'-terminal 2-deoxyribose-5-phosphate sugar moiety from incised apurinic/apyrimidinic (AP) sites to produce a substrate for DNA ligase. The dRP lyase reaction does not require divalent metal ions and likely proceeds via a Schiff base intermediate in a beta-elimination reaction mechanism. In Mus musculus (Mouse), this protein is DNA polymerase subunit gamma-1.